Reading from the N-terminus, the 115-residue chain is Ribonuclease P protein component (115 aa).

Belongs to the RnpA family. Consists of a catalytic RNA component (M1 or rnpB) and a protein subunit.

The catalysed reaction is Endonucleolytic cleavage of RNA, removing 5'-extranucleotides from tRNA precursor.. In terms of biological role, RNaseP catalyzes the removal of the 5'-leader sequence from pre-tRNA to produce the mature 5'-terminus. It can also cleave other RNA substrates such as 4.5S RNA. The protein component plays an auxiliary but essential role in vivo by binding to the 5'-leader sequence and broadening the substrate specificity of the ribozyme. The protein is Ribonuclease P protein component of Staphylococcus carnosus (strain TM300).